A 504-amino-acid chain; its full sequence is Sperm motility kinase 2A (504 aa).

Residues 28 to 276 (YEMLGTIGHG…VAEVMMHPWV (249 aa)) enclose the Protein kinase domain. ATP contacts are provided by residues 34–42 (IGHGGSTKV) and Lys57. Catalysis depends on Asp147, which acts as the Proton acceptor. In terms of domain architecture, UBA spans 294-334 (KPDPAIVKAMGHIGFQAQDIEDSLRQRKFNETMASYCLLKK). Composition is skewed to polar residues over residues 376–393 (PTSLRLSANRQMSVCGRS) and 443–454 (SDESTEGHTSAS). Disordered regions lie at residues 376–403 (PTSLRLSANRQMSVCGRSTSKKRDRSFS) and 443–469 (SDESTEGHTSASAEDKPVRSRGWPRGI).

It belongs to the protein kinase superfamily. CAMK Ser/Thr protein kinase family. Smok subfamily. In terms of tissue distribution, testis-specific. Expressed in the testis from 22 days postpartum (22 dpp).

The enzyme catalyses L-seryl-[protein] + ATP = O-phospho-L-seryl-[protein] + ADP + H(+). The catalysed reaction is L-threonyl-[protein] + ATP = O-phospho-L-threonyl-[protein] + ADP + H(+). Functionally, may play a role in sperm motility, especially in the regulation of flagellar function. The chain is Sperm motility kinase 2A (Smok2a) from Mus musculus (Mouse).